We begin with the raw amino-acid sequence, 406 residues long: Dual-specificity RNA methyltransferase RlmN (406 aa).

Residue Glu119 is the Proton acceptor of the active site. The region spanning 125-370 (DKGRGTLCVS…AMVRRTRGDD (246 aa)) is the Radical SAM core domain. A disulfide bridge links Cys132 with Cys375. [4Fe-4S] cluster contacts are provided by Cys139, Cys143, and Cys146. Residues 192 to 193 (GE), Ser224, 246 to 248 (SLH), and Asn332 each bind S-adenosyl-L-methionine. The S-methylcysteine intermediate role is filled by Cys375.

The protein belongs to the radical SAM superfamily. RlmN family. It depends on [4Fe-4S] cluster as a cofactor.

Its subcellular location is the cytoplasm. The catalysed reaction is adenosine(2503) in 23S rRNA + 2 reduced [2Fe-2S]-[ferredoxin] + 2 S-adenosyl-L-methionine = 2-methyladenosine(2503) in 23S rRNA + 5'-deoxyadenosine + L-methionine + 2 oxidized [2Fe-2S]-[ferredoxin] + S-adenosyl-L-homocysteine. It carries out the reaction adenosine(37) in tRNA + 2 reduced [2Fe-2S]-[ferredoxin] + 2 S-adenosyl-L-methionine = 2-methyladenosine(37) in tRNA + 5'-deoxyadenosine + L-methionine + 2 oxidized [2Fe-2S]-[ferredoxin] + S-adenosyl-L-homocysteine. Its function is as follows. Specifically methylates position 2 of adenine 2503 in 23S rRNA and position 2 of adenine 37 in tRNAs. m2A2503 modification seems to play a crucial role in the proofreading step occurring at the peptidyl transferase center and thus would serve to optimize ribosomal fidelity. The chain is Dual-specificity RNA methyltransferase RlmN from Xylella fastidiosa (strain Temecula1 / ATCC 700964).